The chain runs to 429 residues: MASGEKSRMLFERTKELFPGGVNSPVRAAVKPYPFYVKRGEGAYLYTVDGARIVDLVLAYGPLILGHKHPRVLEAVEEALARGWLYGAPGEAEVLLAEKILGYVKRGGMIRFVNSGTEATMTAIRLARGYTGRDLILKFDGCYHGSHDAVLVAAGSAAAHYGVPTSAGVPEAVARLTLVTPYNDVEALERVFAEYGDRIAGVIVEPVIANAGVIPPRREFLAALQRLSRESGALLILDEVVTGFRLGLEGAQGYFNIEGDIIVLGKIIGGGFPVGAVAGSREVMSLLTPQGKVFNAGTFNAHPITMAAGLATLKALEEEPVYSVSREAAKALEEAASEVLDRTGLPYTINRVESMMQLFIGVEEVSNAAQARKADKKFYVKLHEEMLRRGVFIAPSNLEAVFTGLPHQGEALEIAVEGLRSSLKTVLGS.

K266 bears the N6-(pyridoxal phosphate)lysine mark.

Belongs to the class-III pyridoxal-phosphate-dependent aminotransferase family. HemL subfamily. It depends on pyridoxal 5'-phosphate as a cofactor.

Its subcellular location is the cytoplasm. It carries out the reaction (S)-4-amino-5-oxopentanoate = 5-aminolevulinate. Its pathway is porphyrin-containing compound metabolism; protoporphyrin-IX biosynthesis; 5-aminolevulinate from L-glutamyl-tRNA(Glu): step 2/2. This chain is Glutamate-1-semialdehyde 2,1-aminomutase (hemL), found in Aeropyrum pernix (strain ATCC 700893 / DSM 11879 / JCM 9820 / NBRC 100138 / K1).